The chain runs to 248 residues: Trypsin II-P29 (248 aa).

The signal sequence occupies residues 1–16 (MKFLFLILSCLGAAVA). Residues 17–25 (FPGGADDDK) constitute a propeptide, activation peptide. Positions 26 to 246 (IVGGYTCPEH…YVDWIQETIA (221 aa)) constitute a Peptidase S1 domain. 6 disulfide bridges follow: cysteine 32–cysteine 162, cysteine 50–cysteine 66, cysteine 134–cysteine 235, cysteine 141–cysteine 208, cysteine 173–cysteine 187, and cysteine 198–cysteine 222. The Charge relay system role is filled by histidine 65. Residues glutamate 77, asparagine 79, valine 82, and glutamate 87 each contribute to the Ca(2+) site. Aspartate 109 serves as the catalytic Charge relay system. Serine 202 acts as the Charge relay system in catalysis.

Belongs to the peptidase S1 family. The cofactor is Ca(2+). In terms of tissue distribution, high levels are seen in the pancreas while lower levels are found in the liver, spleen and thymus.

It is found in the secreted. Its subcellular location is the extracellular space. It carries out the reaction Preferential cleavage: Arg-|-Xaa, Lys-|-Xaa.. The protein is Trypsin II-P29 of Gallus gallus (Chicken).